Consider the following 264-residue polypeptide: 3-methyl-2-oxobutanoate hydroxymethyltransferase (264 aa).

Residues D43 and D82 each coordinate Mg(2+). 3-methyl-2-oxobutanoate is bound by residues 43–44 (DS), D82, and K111. E113 contacts Mg(2+). E180 functions as the Proton acceptor in the catalytic mechanism.

The protein belongs to the PanB family. In terms of assembly, homodecamer; pentamer of dimers. Mg(2+) serves as cofactor.

The protein localises to the cytoplasm. It carries out the reaction 3-methyl-2-oxobutanoate + (6R)-5,10-methylene-5,6,7,8-tetrahydrofolate + H2O = 2-dehydropantoate + (6S)-5,6,7,8-tetrahydrofolate. The protein operates within cofactor biosynthesis; (R)-pantothenate biosynthesis; (R)-pantoate from 3-methyl-2-oxobutanoate: step 1/2. Catalyzes the reversible reaction in which hydroxymethyl group from 5,10-methylenetetrahydrofolate is transferred onto alpha-ketoisovalerate to form ketopantoate. The chain is 3-methyl-2-oxobutanoate hydroxymethyltransferase from Campylobacter fetus subsp. fetus (strain 82-40).